Reading from the N-terminus, the 300-residue chain is Small ribosomal subunit protein uS2 (300 aa).

The interval 278 to 300 is disordered; sequence GEAQTGNEGWGTEAAAPAATTQW.

Belongs to the universal ribosomal protein uS2 family. As to quaternary structure, component of the small ribosomal subunit. Mature ribosomes consist of a small (40S) and a large (60S) subunit. The 40S subunit contains about 33 different proteins and 1 molecule of RNA (18S). The 60S subunit contains about 49 different proteins and 3 molecules of RNA (25S, 5.8S and 5S). Interacts with rps21.

The protein resides in the cytoplasm. Its function is as follows. Required for the assembly and/or stability of the 40S ribosomal subunit. Required for the processing of the 20S rRNA-precursor to mature 18S rRNA in a late step of the maturation of 40S ribosomal subunits. This chain is Small ribosomal subunit protein uS2 (rps0), found in Pyrenophora tritici-repentis (strain Pt-1C-BFP) (Wheat tan spot fungus).